A 306-amino-acid polypeptide reads, in one-letter code: D-alanine--D-alanine ligase (306 aa).

The 201-residue stretch at 101–301 (KKILAHAGLP…FPDLVEHLVR (201 aa)) folds into the ATP-grasp domain. 129-185 (VAELGLPVVVKAPTQGSSIGVYIVEREEDLEARITDAVAYGGTRVLVEKFIAGPELT) lines the ATP pocket. Residues aspartate 256, glutamate 268, and asparagine 270 each contribute to the Mg(2+) site.

Belongs to the D-alanine--D-alanine ligase family. Mg(2+) is required as a cofactor. Mn(2+) serves as cofactor.

It localises to the cytoplasm. It catalyses the reaction 2 D-alanine + ATP = D-alanyl-D-alanine + ADP + phosphate + H(+). Its pathway is cell wall biogenesis; peptidoglycan biosynthesis. Its function is as follows. Cell wall formation. This is D-alanine--D-alanine ligase from Desulforudis audaxviator (strain MP104C).